A 576-amino-acid chain; its full sequence is Polypeptide N-acetylgalactosaminyltransferase 12 (576 aa).

Over 1 to 19 (MWGRAVRRRCPRGLRRGRE) the chain is Cytoplasmic. The helical; Signal-anchor for type II membrane protein transmembrane segment at 20 to 37 (ALLALLALAGLGALLRAR) threads the bilayer. Residues 38–58 (SRSGTVDPGPPRTPLPGRHEP) form a disordered region. Residues 38–576 (SRSGTVDPGP…QRWFFKERMS (539 aa)) lie on the Lumenal side of the membrane. 5 disulfide bridges follow: cysteine 120-cysteine 353, cysteine 344-cysteine 417, cysteine 453-cysteine 474, cysteine 501-cysteine 516, and cysteine 542-cysteine 561. The segment at 130-239 (LPKTSVVIAF…EGWLEPLLQR (110 aa)) is catalytic subdomain A. Substrate-binding residues include aspartate 171 and arginine 200. Mn(2+) is bound by residues aspartate 223 and histidine 225. A catalytic subdomain B region spans residues 299–361 (VIRSPTMAGG…PCSHVGHVFP (63 aa)). Tryptophan 330 lines the substrate pocket. A Mn(2+)-binding site is contributed by histidine 358. Tyrosine 366 is a binding site for substrate. The Ricin B-type lectin domain occupies 440 to 572 (FFGMLQNRGL…NSDNQRWFFK (133 aa)).

Belongs to the glycosyltransferase 2 family. GalNAc-T subfamily. Mn(2+) is required as a cofactor.

It localises to the golgi apparatus membrane. The catalysed reaction is L-seryl-[protein] + UDP-N-acetyl-alpha-D-galactosamine = a 3-O-[N-acetyl-alpha-D-galactosaminyl]-L-seryl-[protein] + UDP + H(+). It catalyses the reaction L-threonyl-[protein] + UDP-N-acetyl-alpha-D-galactosamine = a 3-O-[N-acetyl-alpha-D-galactosaminyl]-L-threonyl-[protein] + UDP + H(+). Its pathway is protein modification; protein glycosylation. Catalyzes the initial reaction in O-linked oligosaccharide biosynthesis, the transfer of an N-acetyl-D-galactosamine residue to a serine or threonine residue on the protein receptor. Has activity toward non-glycosylated peptides such as Muc5AC, Muc1a and EA2, and no detectable activity with Muc2 and Muc7. Displays enzymatic activity toward the Gal-NAc-Muc5AC glycopeptide, but no detectable activity to mono-GalNAc-glycosylated Muc1a, Muc2, Muc7 and EA2. May play an important role in the initial step of mucin-type oligosaccharide biosynthesis in digestive organs. The protein is Polypeptide N-acetylgalactosaminyltransferase 12 (Galnt12) of Mus musculus (Mouse).